Reading from the N-terminus, the 333-residue chain is Adenosine deaminase (333 aa).

Zn(2+) contacts are provided by H12 and H14. Substrate is bound by residues H14, D16, and G170. H197 serves as a coordination point for Zn(2+). E200 acts as the Proton donor in catalysis. D278 is a binding site for Zn(2+). D279 lines the substrate pocket.

The protein belongs to the metallo-dependent hydrolases superfamily. Adenosine and AMP deaminases family. Adenosine deaminase subfamily. Zn(2+) is required as a cofactor.

It carries out the reaction adenosine + H2O + H(+) = inosine + NH4(+). The catalysed reaction is 2'-deoxyadenosine + H2O + H(+) = 2'-deoxyinosine + NH4(+). In terms of biological role, catalyzes the hydrolytic deamination of adenosine and 2-deoxyadenosine. The sequence is that of Adenosine deaminase from Proteus mirabilis (strain HI4320).